Reading from the N-terminus, the 127-residue chain is Fluoride-specific ion channel FluC 1 (127 aa).

A run of 4 helical transmembrane segments spans residues 4-24, 35-55, 71-91, and 101-121; these read TLLA…LVSL, VGTL…LAFF, TGFC…VYLI, and GTIL…FILV. Na(+) is bound by residues Gly-75 and Thr-78.

It belongs to the fluoride channel Fluc/FEX (TC 1.A.43) family.

Its subcellular location is the cell inner membrane. The enzyme catalyses fluoride(in) = fluoride(out). Na(+) is not transported, but it plays an essential structural role and its presence is essential for fluoride channel function. Fluoride-specific ion channel. Important for reducing fluoride concentration in the cell, thus reducing its toxicity. This chain is Fluoride-specific ion channel FluC 1, found in Yersinia pestis.